The sequence spans 520 residues: Keratin, type II cytoskeletal 78 (520 aa).

The tract at residues 1–110 (MSLSPCRAQR…DPQFQVVRTQ (110 aa)) is head. The segment at 111–146 (ETQEIRTLNNQFASFIDKVRFLEQQNKVLETKWHLL) is coil 1A. One can recognise an IF rod domain in the interval 111–424 (ETQEIRTLNN…RLLEGEECRM (314 aa)). A linker 1 region spans residues 147–165 (QQQGLSGSQQGLEPVFEAC). A coil 1B region spans residues 166–258 (LDQLRKQLEQ…LNEEELGQLQ (93 aa)). Residues 259–281 (TQASDTSVVLSMDNNRYLDFSSI) are linker 12. The interval 282–421 (ITEVRARYEE…TYRRLLEGEE (140 aa)) is coil 2. The tract at residues 422-520 (CRMSGECTSQ…ESSLKTSITY (99 aa)) is tail.

It belongs to the intermediate filament family. In terms of assembly, heterotetramer of two type I and two type II keratins. In terms of tissue distribution, in non-keratinising esophageal and vaginal epithelium, strongly expressed in the basal and parabasal/lower suprabasal cell layers with considerably decreased expression in the mid/upper suprabasal layers (at protein level). A similar gradient from basal to lower suprabasal layers is seen in the partially keratinised dorsal tongue epithelium, in the scalp and in the plantar epidermis (at protein level). Extension of expression into the suprabasal compartments is distinctly more pronounced in non-keratinising epithelia than in keratinising epithelia and epidermis (at protein level). In scalp sections, present in the interfollicular epidermis and infundibulum including the entire outer root sheath of the hair follicles and also in the sebocytes (at protein level). In sweat glands, expressed in peripheral and luminal cells of the lower duct and in peripheral cells of the middle/upper duct with no expression observed in luminal cells (at protein level). In embryos at the 14th week of pregnancy, detected in basal and parabasal layers but is absent from the uppermost epidermal layer (at protein level). Expressed in tongue epithelium.

The sequence is that of Keratin, type II cytoskeletal 78 (KRT78) from Homo sapiens (Human).